A 572-amino-acid polypeptide reads, in one-letter code: Methionine--tRNA ligase (572 aa).

Positions 11-21 match the 'HIGH' region motif; the sequence is PYINGIKHLGN. Zn(2+)-binding residues include Cys-143, Cys-146, Cys-156, and Cys-159. A 'KMSKS' region motif is present at residues 346-350; that stretch reads QFSTS. Position 349 (Thr-349) interacts with ATP.

This sequence belongs to the class-I aminoacyl-tRNA synthetase family. MetG type 1 subfamily. Monomer. Zn(2+) serves as cofactor.

The protein localises to the cytoplasm. The catalysed reaction is tRNA(Met) + L-methionine + ATP = L-methionyl-tRNA(Met) + AMP + diphosphate. Its function is as follows. Is required not only for elongation of protein synthesis but also for the initiation of all mRNA translation through initiator tRNA(fMet) aminoacylation. This Roseobacter denitrificans (strain ATCC 33942 / OCh 114) (Erythrobacter sp. (strain OCh 114)) protein is Methionine--tRNA ligase.